The primary structure comprises 389 residues: Endo-chitosanase C (389 aa).

Residues 1–22 (MPIKSFASRLALSLAICGTAMG) form the signal peptide. An R3-1 repeat occupies 280–313 (CSWPGHCAGFKNKGATCSSNDDCSDDLACQNGKC). One copy of the R3-2 repeat lies at 320 to 350 (ETCSWEGHCKGATCSSNDDCSDELACISGIC). The R3-3 repeat unit spans residues 357–387 (ETCEWEGHCEGASCSSHDDCDGNLACKNGKC).

It belongs to the glycosyl hydrolase 75 family.

The protein localises to the secreted. It catalyses the reaction Endohydrolysis of beta-(1-&gt;4)-linkages between D-glucosamine residues in a partly acetylated chitosan.. Functionally, chitosanase catalyzing the endo-type cleavage of chitosan, the deacylated form of chitin. Chitosanase may be crucial in the degradation of the deacetylated portion of chitin in the fungal cell wall. Chitoolisaccharides produced by the hydrolysis of partially N-acetylated chitosan are known to have many biological activities, including antibacterial activity, immune-enhancing effects, and elicitor activity. This Aspergillus oryzae (strain ATCC 42149 / RIB 40) (Yellow koji mold) protein is Endo-chitosanase C (csnC).